Here is a 336-residue protein sequence, read N- to C-terminus: tRNA N6-adenosine threonylcarbamoyltransferase (336 aa).

His111 and His115 together coordinate Fe cation. Substrate contacts are provided by residues 134–138, Asp167, Gly180, Asp184, and Asn272; that span reads VVSGG. Fe cation is bound at residue Asp300.

It belongs to the KAE1 / TsaD family. Fe(2+) is required as a cofactor.

It localises to the cytoplasm. The enzyme catalyses L-threonylcarbamoyladenylate + adenosine(37) in tRNA = N(6)-L-threonylcarbamoyladenosine(37) in tRNA + AMP + H(+). In terms of biological role, required for the formation of a threonylcarbamoyl group on adenosine at position 37 (t(6)A37) in tRNAs that read codons beginning with adenine. Is involved in the transfer of the threonylcarbamoyl moiety of threonylcarbamoyl-AMP (TC-AMP) to the N6 group of A37, together with TsaE and TsaB. TsaD likely plays a direct catalytic role in this reaction. This chain is tRNA N6-adenosine threonylcarbamoyltransferase, found in Caldicellulosiruptor saccharolyticus (strain ATCC 43494 / DSM 8903 / Tp8T 6331).